The following is a 260-amino-acid chain: Dehydrogenase/reductase SDR family member 11 (260 aa).

The first 30 residues, 1 to 30 (MTRAGMERWRDRLALVTGASGGIGAAVARA), serve as a signal peptide directing secretion. NADP(+) is bound by residues 18–23 (GASGGI), 43–44 (RT), E49, 70–71 (DL), and N97. Substrate contacts are provided by S151 and Y166. Residues Y166, K170, 201–204 (VETQ), and K208 contribute to the NADP(+) site. The active-site Proton acceptor is the Y166.

Belongs to the short-chain dehydrogenases/reductases (SDR) family. As to quaternary structure, homotetramer.

It localises to the secreted. It catalyses the reaction a 3beta-hydroxysteroid + NADP(+) = a 3-oxosteroid + NADPH + H(+). The catalysed reaction is 17beta-estradiol + NAD(+) = estrone + NADH + H(+). The enzyme catalyses 17beta-estradiol + NADP(+) = estrone + NADPH + H(+). Its pathway is steroid biosynthesis; estrogen biosynthesis. Inhibited by flavonoids including apigenin, luteolin, genistein, kaempferol and quercetin and also by carbenoxolone, zearalenone, glycyrrhetinic, curcumin and flufenamic acid. Functionally, catalyzes the conversion of the 17-keto group of estrone, 4- and 5-androstenes and 5-alpha-androstanes into their 17-beta-hydroxyl metabolites and the conversion of the 3-keto group of 3-, 3,17- and 3,20- diketosteroids into their 3-hydroxyl metabolites. Exhibits reductive 3-beta-hydroxysteroid dehydrogenase activity toward 5-beta-androstanes, 5-beta-pregnanes, 4-pregnenes and bile acids. May also reduce endogenous and exogenous alpha-dicarbonyl compounds and xenobiotic alicyclic ketones. The protein is Dehydrogenase/reductase SDR family member 11 (Dhrs11) of Mus musculus (Mouse).